Consider the following 362-residue polypeptide: Zinc transporter 9 (362 aa).

The N-terminal stretch at methionine 1 to alanine 21 is a signal peptide. The Extracellular portion of the chain corresponds to alanine 22–lysine 42. The helical transmembrane segment at valine 43–glycine 63 threads the bilayer. Residues arginine 64–serine 74 are Cytoplasmic-facing. Residues leucine 75–isoleucine 95 form a helical membrane-spanning segment. Residues leucine 96–glycine 120 lie on the Extracellular side of the membrane. Residues leucine 121–phenylalanine 141 traverse the membrane as a helical segment. The Cytoplasmic portion of the chain corresponds to leucine 142–arginine 207. Residues valine 208–leucine 228 traverse the membrane as a helical segment. Residues glycine 229–proline 239 lie on the Extracellular side of the membrane. Residues leucine 240–valine 260 form a helical membrane-spanning segment. At glutamine 261 to alanine 269 the chain is on the cytoplasmic side. The chain crosses the membrane as a helical span at residues valine 270 to isoleucine 290. Residues serine 291–alanine 301 lie on the Extracellular side of the membrane. Residues leucine 302–valine 322 form a helical membrane-spanning segment. Residues aspartate 323–glutamine 341 are Cytoplasmic-facing. The helical transmembrane segment at leucine 342–alanine 362 threads the bilayer.

Belongs to the ZIP transporter (TC 2.A.5) family.

Its subcellular location is the cell membrane. In terms of biological role, zinc transporter that may be involved in zinc uptake from the rhizosphere. The sequence is that of Zinc transporter 9 (ZIP9) from Oryza sativa subsp. japonica (Rice).